We begin with the raw amino-acid sequence, 100 residues long: Small ribosomal subunit protein uS14c (100 aa).

The protein belongs to the universal ribosomal protein uS14 family. As to quaternary structure, part of the 30S ribosomal subunit.

The protein resides in the plastid. The protein localises to the chloroplast. Binds 16S rRNA, required for the assembly of 30S particles. This Phaeodactylum tricornutum (strain CCAP 1055/1) protein is Small ribosomal subunit protein uS14c.